The primary structure comprises 357 residues: DNA primase small subunit PriS (357 aa).

Residues Asp-105, Asp-107, and Asp-259 contribute to the active site.

It belongs to the eukaryotic-type primase small subunit family. In terms of assembly, heterodimer of a small subunit (PriS) and a large subunit (PriL). Requires Mg(2+) as cofactor. The cofactor is Mn(2+).

Catalytic subunit of DNA primase, an RNA polymerase that catalyzes the synthesis of short RNA molecules used as primers for DNA polymerase during DNA replication. The small subunit contains the primase catalytic core and has DNA synthesis activity on its own. Binding to the large subunit stabilizes and modulates the activity, increasing the rate of DNA synthesis while decreasing the length of the DNA fragments, and conferring RNA synthesis capability. The DNA polymerase activity may enable DNA primase to also catalyze primer extension after primer synthesis. May also play a role in DNA repair. The protein is DNA primase small subunit PriS of Methanococcus maripaludis (strain C6 / ATCC BAA-1332).